The chain runs to 163 residues: uncharacterized protein (163 aa).

This is an uncharacterized protein from Dictyostelium discoideum (Social amoeba).